Consider the following 156-residue polypeptide: SsrA-binding protein (156 aa).

Belongs to the SmpB family.

It localises to the cytoplasm. Its function is as follows. Required for rescue of stalled ribosomes mediated by trans-translation. Binds to transfer-messenger RNA (tmRNA), required for stable association of tmRNA with ribosomes. tmRNA and SmpB together mimic tRNA shape, replacing the anticodon stem-loop with SmpB. tmRNA is encoded by the ssrA gene; the 2 termini fold to resemble tRNA(Ala) and it encodes a 'tag peptide', a short internal open reading frame. During trans-translation Ala-aminoacylated tmRNA acts like a tRNA, entering the A-site of stalled ribosomes, displacing the stalled mRNA. The ribosome then switches to translate the ORF on the tmRNA; the nascent peptide is terminated with the 'tag peptide' encoded by the tmRNA and targeted for degradation. The ribosome is freed to recommence translation, which seems to be the essential function of trans-translation. The chain is SsrA-binding protein from Clostridium botulinum (strain Alaska E43 / Type E3).